The sequence spans 160 residues: MRIWIDADACPKAAKELVCKFALKRKLEVWMVAGQPQVKPPFACVRLVVVESGMDAADDYLVEQAEPGDLAICSDVPLADRLIKKQVAALDPRGREFDARNMGDKLAMRNLMADLRDQGQMGGGQAPYGERDRQAFANALDRLLTRLQREADLRASQPHR.

It belongs to the UPF0178 family.

This Pseudomonas aeruginosa (strain ATCC 15692 / DSM 22644 / CIP 104116 / JCM 14847 / LMG 12228 / 1C / PRS 101 / PAO1) protein is UPF0178 protein PA5247.